Reading from the N-terminus, the 596-residue chain is Chaperone protein DnaK (596 aa).

Thr-180 bears the Phosphothreonine; by autocatalysis mark.

This sequence belongs to the heat shock protein 70 family.

Functionally, acts as a chaperone. This Thermosipho melanesiensis (strain DSM 12029 / CIP 104789 / BI429) protein is Chaperone protein DnaK.